We begin with the raw amino-acid sequence, 336 residues long: Phenylalanine--tRNA ligase alpha subunit (336 aa).

E257 contacts Mg(2+).

The protein belongs to the class-II aminoacyl-tRNA synthetase family. Phe-tRNA synthetase alpha subunit type 1 subfamily. As to quaternary structure, tetramer of two alpha and two beta subunits. It depends on Mg(2+) as a cofactor.

It is found in the cytoplasm. The catalysed reaction is tRNA(Phe) + L-phenylalanine + ATP = L-phenylalanyl-tRNA(Phe) + AMP + diphosphate + H(+). The sequence is that of Phenylalanine--tRNA ligase alpha subunit from Xanthomonas campestris pv. campestris (strain 8004).